A 137-amino-acid chain; its full sequence is BolA-like protein 1 (137 aa).

Phosphoserine is present on S81. A disordered region spans residues 114–137; the sequence is WGENSQLDTSPPCLGGNKKTLGTP.

This sequence belongs to the BolA/IbaG family. In terms of assembly, interacts with GLRX5.

The protein localises to the mitochondrion. In terms of biological role, acts as a mitochondrial iron-sulfur (Fe-S) cluster assembly factor that facilitates (Fe-S) cluster insertion into a subset of mitochondrial proteins. Probably acts together with the monothiol glutaredoxin GLRX5. May protect cells against oxidative stress. The polypeptide is BolA-like protein 1 (BOLA1) (Pongo abelii (Sumatran orangutan)).